A 383-amino-acid chain; its full sequence is Acetylornithine deacetylase (383 aa).

H80 provides a ligand contact to Zn(2+). Residue D82 is part of the active site. D112 serves as a coordination point for Zn(2+). E144 is an active-site residue. Zn(2+)-binding residues include E145, E169, and H355.

Belongs to the peptidase M20A family. ArgE subfamily. Homodimer. Requires Zn(2+) as cofactor. The cofactor is Co(2+). Glutathione is required as a cofactor.

Its subcellular location is the cytoplasm. The catalysed reaction is N(2)-acetyl-L-ornithine + H2O = L-ornithine + acetate. Its pathway is amino-acid biosynthesis; L-arginine biosynthesis; L-ornithine from N(2)-acetyl-L-ornithine (linear): step 1/1. Functionally, catalyzes the hydrolysis of the amide bond of N(2)-acetylated L-amino acids. Cleaves the acetyl group from N-acetyl-L-ornithine to form L-ornithine, an intermediate in L-arginine biosynthesis pathway, and a branchpoint in the synthesis of polyamines. This Escherichia coli O157:H7 protein is Acetylornithine deacetylase.